The primary structure comprises 86 residues: Large ribosomal subunit protein bL27c (86 aa).

The tract at residues 1 to 27 is disordered; it reads MAHKKGSGSTRNGRDSNSKRLGVKKYG.

Belongs to the bacterial ribosomal protein bL27 family.

It is found in the plastid. Its subcellular location is the chloroplast. This Porphyra purpurea (Red seaweed) protein is Large ribosomal subunit protein bL27c (rpl27).